Consider the following 276-residue polypeptide: Octanoyltransferase LipM (276 aa).

The BPL/LPL catalytic domain maps to 32-247; that stretch reads GEVAPTLRFY…GFEDALQLTF (216 aa). Cys-149 (acyl-thioester intermediate) is an active-site residue.

Belongs to the octanoyltransferase LipM family. Monomer.

It catalyses the reaction octanoyl-[ACP] + L-lysyl-[protein] = N(6)-octanoyl-L-lysyl-[protein] + holo-[ACP] + H(+). It functions in the pathway protein modification; protein lipoylation via endogenous pathway; protein N(6)-(lipoyl)lysine from octanoyl-[acyl-carrier-protein]. Catalyzes the transfer of endogenously produced octanoic acid from octanoyl-acyl-carrier-protein onto the lipoyl domain of GcvH, an intermediate carrier during protein lipoylation. This is Octanoyltransferase LipM from Exiguobacterium sibiricum (strain DSM 17290 / CCUG 55495 / CIP 109462 / JCM 13490 / 255-15).